The sequence spans 47 residues: Delta-halcutoxin-Hcg1a (47 aa).

Cystine bridges form between Cys-3–Cys-43, Cys-5–Cys-33, and Cys-26–Cys-44.

This sequence belongs to the sea anemone sodium channel inhibitory toxin family. Type II subfamily.

The protein localises to the secreted. The protein resides in the nematocyst. Functionally, is potently lethal to crabs, although it showed neither lethal activity in mice nor hemolytic activity. May bind to voltage-gated sodium channels (Nav), thereby delaying their inactivation during signal transduction. This is Delta-halcutoxin-Hcg1a from Isohalcurias carlgreni (Sea anemone).